A 115-amino-acid chain; its full sequence is Probable 4-amino-4-deoxy-L-arabinose-phosphoundecaprenol flippase subunit ArnE (115 aa).

3 helical membrane-spanning segments follow: residues 42 to 62 (PWPW…LLLL), 65 to 85 (VEVG…TLAA), and 93 to 112 (VDRR…VLLG). Residues 46–113 (LALLALGLGL…IVAGVVLLGR (68 aa)) enclose the EamA domain.

It belongs to the ArnE family. As to quaternary structure, heterodimer of ArnE and ArnF.

Its subcellular location is the cell inner membrane. It functions in the pathway bacterial outer membrane biogenesis; lipopolysaccharide biosynthesis. In terms of biological role, translocates 4-amino-4-deoxy-L-arabinose-phosphoundecaprenol (alpha-L-Ara4N-phosphoundecaprenol) from the cytoplasmic to the periplasmic side of the inner membrane. This chain is Probable 4-amino-4-deoxy-L-arabinose-phosphoundecaprenol flippase subunit ArnE, found in Pseudomonas aeruginosa (strain UCBPP-PA14).